The following is a 480-amino-acid chain: Endothelial transcription factor GATA-2 (480 aa).

The residue at position 73 (Ser-73) is a Phosphoserine. The residue at position 86 (Arg-86) is an Asymmetric dimethylarginine. The tract at residues 166 to 208 (SGSHLFGFPPTPPKEVSPDPSTTGAASPASPSAGGSVARGEDK) is disordered. Residues 183 to 201 (PDPSTTGAASPASPSAGGS) show a composition bias toward low complexity. At Ser-192 the chain carries Phosphoserine. 2 consecutive GATA-type zinc fingers follow at residues 295-319 (CVNC…CNAC) and 349-373 (CANC…CNAC). Lys-389 is covalently cross-linked (Glycyl lysine isopeptide (Lys-Gly) (interchain with G-Cter in SUMO2)). The disordered stretch occupies residues 457-480 (TPIHPSSSLSFGHPHPSSMVTAMG).

As to quaternary structure, interacts with BRD3. Interacts with AR and CCAR1. Interacts with MDFIC.

It localises to the nucleus. Transcriptional activator which regulates endothelin-1 gene expression in endothelial cells. Binds to the consensus sequence 5'-AGATAG-3'. Plays an important role in the regulation of phagocytosis in alveolar macrophages, particularly during P.carinii infection. The chain is Endothelial transcription factor GATA-2 from Rattus norvegicus (Rat).